A 368-amino-acid polypeptide reads, in one-letter code: Seven-bladed beta-propeller protein MSMEG_5308 (368 aa).

In terms of assembly, interacts with MmpL3 and TtfA.

The protein localises to the cell septum. It localises to the cell tip. Stabilizes the MmpL3/TtfA trehalose monomycolate (TMM) transport complex under stress conditions. This is Seven-bladed beta-propeller protein MSMEG_5308 from Mycolicibacterium smegmatis (strain ATCC 700084 / mc(2)155) (Mycobacterium smegmatis).